The chain runs to 368 residues: uncharacterized protein (368 aa).

The protein belongs to the YCR102c/YLR460c/YNL134c family.

This is an uncharacterized protein from Saccharomyces cerevisiae (strain ATCC 204508 / S288c) (Baker's yeast).